The chain runs to 59 residues: Large ribosomal subunit protein uL30 (59 aa).

It belongs to the universal ribosomal protein uL30 family. In terms of assembly, part of the 50S ribosomal subunit.

In Listeria welshimeri serovar 6b (strain ATCC 35897 / DSM 20650 / CCUG 15529 / CIP 8149 / NCTC 11857 / SLCC 5334 / V8), this protein is Large ribosomal subunit protein uL30.